The sequence spans 668 residues: DNA mismatch repair protein MutL (668 aa).

A disordered region spans residues Thr-437–Lys-459. The segment covering Tyr-438–Lys-459 has biased composition (polar residues).

Belongs to the DNA mismatch repair MutL/HexB family.

This protein is involved in the repair of mismatches in DNA. It is required for dam-dependent methyl-directed DNA mismatch repair. May act as a 'molecular matchmaker', a protein that promotes the formation of a stable complex between two or more DNA-binding proteins in an ATP-dependent manner without itself being part of a final effector complex. The sequence is that of DNA mismatch repair protein MutL from Leuconostoc citreum (strain KM20).